We begin with the raw amino-acid sequence, 368 residues long: tRNA-specific 2-thiouridylase MnmA (368 aa).

ATP-binding positions include G11 to S18 and M37. Residues N97–D99 are interaction with target base in tRNA. C102 serves as the catalytic Nucleophile. The cysteines at positions 102 and 199 are disulfide-linked. ATP is bound at residue G127. An interaction with tRNA region spans residues K149–Q151. Catalysis depends on C199, which acts as the Cysteine persulfide intermediate. The segment at R311–Y312 is interaction with tRNA.

The protein belongs to the MnmA/TRMU family. Interacts with TusE.

The protein localises to the cytoplasm. The catalysed reaction is S-sulfanyl-L-cysteinyl-[protein] + uridine(34) in tRNA + AH2 + ATP = 2-thiouridine(34) in tRNA + L-cysteinyl-[protein] + A + AMP + diphosphate + H(+). Its function is as follows. Catalyzes the 2-thiolation of uridine at the wobble position (U34) of tRNA(Lys), tRNA(Glu) and tRNA(Gln), leading to the formation of s(2)U34, the first step of tRNA-mnm(5)s(2)U34 synthesis. Sulfur is provided by IscS, via a sulfur-relay system. Binds ATP and its substrate tRNAs. The polypeptide is tRNA-specific 2-thiouridylase MnmA (Shigella boydii serotype 18 (strain CDC 3083-94 / BS512)).